The primary structure comprises 154 residues: MGLSDGEWQLVLKVWGKVETDITGHGQDVLIRLFKTHPETLEKFDKFKHLKTEDEMKASADLKKHGGVVLTALGSILKKKGQHEAELKPLAQSHATKHKISIKFLEFISEAIIHVLQSKHSADFGADAQAAMGKALELFRNDMATKYKEFGFQG.

The region spanning 2-148 (GLSDGEWQLV…FRNDMATKYK (147 aa)) is the Globin domain. Residue serine 4 is modified to Phosphoserine. A nitrite-binding site is contributed by histidine 65. Histidine 65 provides a ligand contact to O2. Residue histidine 94 participates in heme b binding.

This sequence belongs to the globin family. As to quaternary structure, monomeric.

The protein localises to the cytoplasm. It localises to the sarcoplasm. The catalysed reaction is Fe(III)-heme b-[protein] + nitric oxide + H2O = Fe(II)-heme b-[protein] + nitrite + 2 H(+). It catalyses the reaction H2O2 + AH2 = A + 2 H2O. Its function is as follows. Monomeric heme protein which primary function is to store oxygen and facilitate its diffusion within muscle tissues. Reversibly binds oxygen through a pentacoordinated heme iron and enables its timely and efficient release as needed during periods of heightened demand. Depending on the oxidative conditions of tissues and cells, and in addition to its ability to bind oxygen, it also has a nitrite reductase activity whereby it regulates the production of bioactive nitric oxide. Under stress conditions, like hypoxia and anoxia, it also protects cells against reactive oxygen species thanks to its pseudoperoxidase activity. This chain is Myoglobin (MB), found in Tachyglossus aculeatus aculeatus (Southeast Australian short-beaked echidna).